Here is a 115-residue protein sequence, read N- to C-terminus: Protein TrbA (115 aa).

4 helical membrane-spanning segments follow: residues 5–25 (YLKMFTGVVLLIFVIIAGYFF), 39–59 (LVFLVVNIACLYVLTASLWFL), 60–80 (CGAIMSQGAALVVSIVAAALP), and 91–111 (IFICIMLSSVWSGVMWFFIRG).

The protein localises to the cell membrane. The polypeptide is Protein TrbA (trbA) (Escherichia coli (strain K12)).